Consider the following 447-residue polypeptide: Methylenetetrahydrofolate--tRNA-(uracil-5-)-methyltransferase TrmFO (447 aa).

8 to 13 (GGGLAG) is a binding site for FAD. The tract at residues 398 to 421 (NWGLVPAPPKRENGRRLGRQERRR) is disordered. A compositionally biased stretch (basic and acidic residues) spans 406-417 (PKRENGRRLGRQ).

This sequence belongs to the MnmG family. TrmFO subfamily. FAD is required as a cofactor.

Its subcellular location is the cytoplasm. It catalyses the reaction uridine(54) in tRNA + (6R)-5,10-methylene-5,6,7,8-tetrahydrofolate + NADH + H(+) = 5-methyluridine(54) in tRNA + (6S)-5,6,7,8-tetrahydrofolate + NAD(+). The catalysed reaction is uridine(54) in tRNA + (6R)-5,10-methylene-5,6,7,8-tetrahydrofolate + NADPH + H(+) = 5-methyluridine(54) in tRNA + (6S)-5,6,7,8-tetrahydrofolate + NADP(+). Its function is as follows. Catalyzes the folate-dependent formation of 5-methyl-uridine at position 54 (M-5-U54) in all tRNAs. The polypeptide is Methylenetetrahydrofolate--tRNA-(uracil-5-)-methyltransferase TrmFO (Rubrobacter xylanophilus (strain DSM 9941 / JCM 11954 / NBRC 16129 / PRD-1)).